A 408-amino-acid chain; its full sequence is Acetate kinase (408 aa).

Asparagine 7 contacts Mg(2+). Lysine 14 contacts ATP. Arginine 91 is a substrate binding site. The active-site Proton donor/acceptor is the aspartate 148. Residues 208–212 (HLGNG), 283–285 (DFR), and 331–335 (GIGEN) contribute to the ATP site. A Mg(2+)-binding site is contributed by glutamate 384.

This sequence belongs to the acetokinase family. In terms of assembly, homodimer. Mg(2+) is required as a cofactor. The cofactor is Mn(2+).

The protein resides in the cytoplasm. The catalysed reaction is acetate + ATP = acetyl phosphate + ADP. Its pathway is metabolic intermediate biosynthesis; acetyl-CoA biosynthesis; acetyl-CoA from acetate: step 1/2. Its function is as follows. Catalyzes the formation of acetyl phosphate from acetate and ATP. Can also catalyze the reverse reaction. The protein is Acetate kinase of Methanosarcina acetivorans (strain ATCC 35395 / DSM 2834 / JCM 12185 / C2A).